A 762-amino-acid chain; its full sequence is Anhydrosialidase (762 aa).

The signal sequence occupies residues 1 to 27; it reads MGRIGKKAMAIALVSAVMVTPLNVCAT. Arg293 contributes to the substrate binding site. Asp318 functions as the Proton acceptor in the catalytic mechanism. 3 BNR repeats span residues 328 to 339, 511 to 522, and 571 to 582; these read AKSTDGGNTWSE, RYSDDEGASWSD, and MYSDDHGDNWTY. Glu595 is an active-site residue. Arg611 provides a ligand contact to substrate. Residues 620–631 form a BNR 4 repeat; it reads VTSIDGGETWSD. Arg673 serves as a coordination point for substrate. The active-site Nucleophile is Tyr713.

Belongs to the glycosyl hydrolase 33 family.

The protein localises to the secreted. It is found in the extracellular space. It carries out the reaction Elimination of alpha-sialyl groups in N-acetylneuraminic acid glycosides, releasing 2,7-anhydro-alpha-N-acetylneuraminate.. This Macrobdella decora (North American leech) protein is Anhydrosialidase.